A 219-amino-acid chain; its full sequence is Transcriptional regulatory protein QseB (219 aa).

One can recognise a Response regulatory domain in the interval 2–116 (RILLVEDDTL…EVAARLEALV (115 aa)). 4-aspartylphosphate is present on Asp51. Residues 124 to 218 (SSELRHGQVT…VHGIGYTLGD (95 aa)) constitute a DNA-binding region (ompR/PhoB-type).

Post-translationally, phosphorylated by QseC.

The protein localises to the cytoplasm. Member of a two-component regulatory system QseB/QseC. Activates the flagella regulon by activating transcription of flhDC. This chain is Transcriptional regulatory protein QseB (qseB), found in Salmonella typhimurium (strain LT2 / SGSC1412 / ATCC 700720).